Consider the following 198-residue polypeptide: Glycerol-3-phosphate acyltransferase (198 aa).

Transmembrane regions (helical) follow at residues 10 to 30 (LIPI…WILV), 57 to 77 (GISF…ILIL), 86 to 106 (IMYL…WFLF), 118 to 138 (VVLS…AVVF), and 160 to 180 (AVTE…IVLI).

It belongs to the PlsY family. In terms of assembly, probably interacts with PlsX.

It is found in the cell inner membrane. The enzyme catalyses an acyl phosphate + sn-glycerol 3-phosphate = a 1-acyl-sn-glycero-3-phosphate + phosphate. It participates in lipid metabolism; phospholipid metabolism. Its function is as follows. Catalyzes the transfer of an acyl group from acyl-phosphate (acyl-PO(4)) to glycerol-3-phosphate (G3P) to form lysophosphatidic acid (LPA). This enzyme utilizes acyl-phosphate as fatty acyl donor, but not acyl-CoA or acyl-ACP. The chain is Glycerol-3-phosphate acyltransferase from Anaplasma marginale (strain St. Maries).